The chain runs to 213 residues: StAR-related lipid transfer protein 5 (213 aa).

One can recognise an START domain in the interval 1 to 213 (MDPALAAQMS…LQKAVKQFHE (213 aa)).

Functionally, may be involved in the intracellular transport of sterols or other lipids. May bind cholesterol or other sterols. This chain is StAR-related lipid transfer protein 5 (STARD5), found in Homo sapiens (Human).